The chain runs to 88 residues: Small ribosomal subunit protein uS15 (88 aa).

The protein belongs to the universal ribosomal protein uS15 family. Part of the 30S ribosomal subunit. Forms a bridge to the 50S subunit in the 70S ribosome, contacting the 23S rRNA.

Its function is as follows. One of the primary rRNA binding proteins, it binds directly to 16S rRNA where it helps nucleate assembly of the platform of the 30S subunit by binding and bridging several RNA helices of the 16S rRNA. In terms of biological role, forms an intersubunit bridge (bridge B4) with the 23S rRNA of the 50S subunit in the ribosome. In Mycoplasmopsis agalactiae (strain NCTC 10123 / CIP 59.7 / PG2) (Mycoplasma agalactiae), this protein is Small ribosomal subunit protein uS15.